A 194-amino-acid polypeptide reads, in one-letter code: Large ribosomal subunit protein uL18 (194 aa).

This sequence belongs to the universal ribosomal protein uL18 family. Part of the 50S ribosomal subunit. Contacts the 5S and 23S rRNAs.

This is one of the proteins that bind and probably mediate the attachment of the 5S RNA into the large ribosomal subunit, where it forms part of the central protuberance. This is Large ribosomal subunit protein uL18 from Methanococcus aeolicus (strain ATCC BAA-1280 / DSM 17508 / OCM 812 / Nankai-3).